A 320-amino-acid chain; its full sequence is Nicotianamine synthase 2 (320 aa).

The protein belongs to the nicotianamine synthase (NAS)-like family.

It carries out the reaction 3 S-adenosyl-L-methionine = nicotianamine + 3 S-methyl-5'-thioadenosine + 3 H(+). Synthesizes nicotianamine, a polyamine which serves as a sensor for the physiological iron status within the plant, and/or might be involved in the transport of iron. The protein is Nicotianamine synthase 2 (NAS2) of Arabidopsis thaliana (Mouse-ear cress).